Reading from the N-terminus, the 252-residue chain is Chitooligosaccharide deacetylase (252 aa).

Positions 61 and 125 each coordinate Mg(2+).

The protein belongs to the YdjC deacetylase family. ChbG subfamily. As to quaternary structure, homodimer. Requires Mg(2+) as cofactor.

The protein resides in the cytoplasm. It carries out the reaction N,N'-diacetylchitobiose + H2O = N-acetyl-beta-D-glucosaminyl-(1-&gt;4)-D-glucosamine + acetate. It catalyses the reaction diacetylchitobiose-6'-phosphate + H2O = N'-monoacetylchitobiose-6'-phosphate + acetate. It functions in the pathway glycan degradation; chitin degradation. Its function is as follows. Involved in the degradation of chitin. ChbG is essential for growth on the acetylated chitooligosaccharides chitobiose and chitotriose but is dispensable for growth on cellobiose and chitosan dimer, the deacetylated form of chitobiose. Deacetylation of chitobiose-6-P and chitotriose-6-P is necessary for both the activation of the chb promoter by the regulatory protein ChbR and the hydrolysis of phosphorylated beta-glucosides by the phospho-beta-glucosidase ChbF. Catalyzes the removal of only one acetyl group from chitobiose-6-P to yield monoacetylchitobiose-6-P, the inducer of ChbR and the substrate of ChbF. The sequence is that of Chitooligosaccharide deacetylase from Escherichia coli O8 (strain IAI1).